The primary structure comprises 314 residues: Acetyl-coenzyme A carboxylase carboxyl transferase subunit alpha (314 aa).

One can recognise a CoA carboxyltransferase C-terminal domain in the interval 32–289; that stretch reads EIDMLEASLA…KRTFESHLSE (258 aa).

This sequence belongs to the AccA family. In terms of assembly, acetyl-CoA carboxylase is a heterohexamer composed of biotin carboxyl carrier protein (AccB), biotin carboxylase (AccC) and two subunits each of ACCase subunit alpha (AccA) and ACCase subunit beta (AccD).

The protein localises to the cytoplasm. It carries out the reaction N(6)-carboxybiotinyl-L-lysyl-[protein] + acetyl-CoA = N(6)-biotinyl-L-lysyl-[protein] + malonyl-CoA. Its pathway is lipid metabolism; malonyl-CoA biosynthesis; malonyl-CoA from acetyl-CoA: step 1/1. Its function is as follows. Component of the acetyl coenzyme A carboxylase (ACC) complex. First, biotin carboxylase catalyzes the carboxylation of biotin on its carrier protein (BCCP) and then the CO(2) group is transferred by the carboxyltransferase to acetyl-CoA to form malonyl-CoA. This chain is Acetyl-coenzyme A carboxylase carboxyl transferase subunit alpha, found in Staphylococcus saprophyticus subsp. saprophyticus (strain ATCC 15305 / DSM 20229 / NCIMB 8711 / NCTC 7292 / S-41).